The sequence spans 158 residues: Placenta growth factor (158 aa).

A signal peptide spans 1–18 (MLVMKLFTCFLQVLAGLA). Residues Asn-29 and Asn-30 are each glycosylated (N-linked (GlcNAc...) asparagine). Cystine bridges form between Cys-48-Cys-90, Cys-79-Cys-125, and Cys-83-Cys-127. An N-linked (GlcNAc...) asparagine glycan is attached at Asn-97. The interval 136–158 (AERRKTKGKRKRSRNSQTEEPHP) is disordered. Residues 137–149 (ERRKTKGKRKRSR) show a composition bias toward basic residues.

The protein belongs to the PDGF/VEGF growth factor family. Antiparallel homodimer; disulfide-linked. Also found as heterodimer with VEGFA/VEGF.

It localises to the secreted. Functionally, growth factor active in angiogenesis and endothelial cell growth, stimulating their proliferation and migration. It binds to the receptor FLT1/VEGFR-1. Also promotes cell tumor growth. The polypeptide is Placenta growth factor (Pgf) (Mus musculus (Mouse)).